The chain runs to 331 residues: Large ribosomal subunit protein uL3 (331 aa).

Belongs to the universal ribosomal protein uL3 family. Part of the 50S ribosomal subunit. Forms a cluster with proteins L14 and L24e.

Functionally, one of the primary rRNA binding proteins, it binds directly near the 3'-end of the 23S rRNA, where it nucleates assembly of the 50S subunit. In Thermoplasma volcanium (strain ATCC 51530 / DSM 4299 / JCM 9571 / NBRC 15438 / GSS1), this protein is Large ribosomal subunit protein uL3.